The sequence spans 293 residues: Cell adhesion molecule CEACAM21 (293 aa).

Residues 1 to 34 form the signal peptide; sequence MGPPSACPHRECIPWQGLLLTASLLTFWNAPTTA. Topologically, residues 35–240 are extracellular; the sequence is WLFIASAPFE…TVKSDDNTLG (206 aa). N-linked (GlcNAc...) asparagine glycosylation is present at Asn-111. In terms of domain architecture, Ig-like C2-type spans 147–231; sequence PSIQASSTTV…SNRSDPLKLT (85 aa). A disulfide bridge connects residues Cys-166 and Cys-214. A helical transmembrane segment spans residues 241 to 261; sequence ILIGVLVGSLLVAALVCFLLL. The Cytoplasmic portion of the chain corresponds to 262 to 293; the sequence is RKTGRASDQSDFREQQPPASTPGHGPSDSSIS. A disordered region spans residues 267–293; sequence ASDQSDFREQQPPASTPGHGPSDSSIS.

The protein belongs to the immunoglobulin superfamily. CEA family.

The protein resides in the membrane. The protein is Cell adhesion molecule CEACAM21 of Homo sapiens (Human).